The sequence spans 335 residues: Dihydroorotate dehydrogenase (quinone) (335 aa).

FMN-binding positions include 58–62 (AGADK) and T82. K62 serves as a coordination point for substrate. 107–111 (NRNGF) contributes to the substrate binding site. N135 and N168 together coordinate FMN. N168 is a substrate binding site. Catalysis depends on S171, which acts as the Nucleophile. N173 serves as a coordination point for substrate. 2 residues coordinate FMN: K213 and G241. 242–243 (NT) provides a ligand contact to substrate. Residues G264, G293, and 314–315 (YS) each bind FMN.

The protein belongs to the dihydroorotate dehydrogenase family. Type 2 subfamily. In terms of assembly, monomer. The cofactor is FMN.

The protein resides in the cell membrane. The catalysed reaction is (S)-dihydroorotate + a quinone = orotate + a quinol. Its pathway is pyrimidine metabolism; UMP biosynthesis via de novo pathway; orotate from (S)-dihydroorotate (quinone route): step 1/1. Its function is as follows. Catalyzes the conversion of dihydroorotate to orotate with quinone as electron acceptor. In Actinobacillus pleuropneumoniae serotype 7 (strain AP76), this protein is Dihydroorotate dehydrogenase (quinone).